The chain runs to 461 residues: Putative aldehyde dehydrogenase FUS7 (461 aa).

NAD(+) is bound at residue 220 to 225 (GSTATG). Residues glutamate 242 and cysteine 276 contribute to the active site.

The protein belongs to the aldehyde dehydrogenase family.

It catalyses the reaction an aldehyde + NAD(+) + H2O = a carboxylate + NADH + 2 H(+). Functionally, putative aldehyde dehydrogenase; part of the gene cluster that mediates the biosynthesis of the mycotoxin fusarin C. Within the cluster, FUS1, FUS2, FUS8 and FUS9 are sufficient for fusarin production. The other FUS cluster members are not essential for fusarin C biosynthesis. The protein is Putative aldehyde dehydrogenase FUS7 of Gibberella moniliformis (strain M3125 / FGSC 7600) (Maize ear and stalk rot fungus).